Reading from the N-terminus, the 397-residue chain is Major outer membrane porin, serovar H (397 aa).

The signal sequence occupies residues Met1 to Ala22.

It belongs to the chlamydial porin (CP) (TC 1.B.2) family. As to quaternary structure, part of a disulfide cross-linked outer membrane complex (COMC) composed of the major outer membrane porin (MOMP), the small cysteine-rich protein (OmcA) and the large cysteine-rich periplasmic protein (OmcB).

The protein resides in the cell outer membrane. Functionally, in elementary bodies (EBs, the infectious stage, which is able to survive outside the host cell) provides the structural integrity of the outer envelope through disulfide cross-links with the small cysteine-rich protein and the large cysteine-rich periplasmic protein. It has been described in publications as the Sarkosyl-insoluble COMC (Chlamydia outer membrane complex), and serves as the functional equivalent of peptidoglycan. Permits diffusion of specific solutes through the outer membrane. The protein is Major outer membrane porin, serovar H (ompA) of Chlamydia trachomatis.